A 204-amino-acid polypeptide reads, in one-letter code: Leucyl/phenylalanyl-tRNA--protein transferase (204 aa).

This sequence belongs to the L/F-transferase family.

The protein resides in the cytoplasm. The catalysed reaction is N-terminal L-lysyl-[protein] + L-leucyl-tRNA(Leu) = N-terminal L-leucyl-L-lysyl-[protein] + tRNA(Leu) + H(+). It carries out the reaction N-terminal L-arginyl-[protein] + L-leucyl-tRNA(Leu) = N-terminal L-leucyl-L-arginyl-[protein] + tRNA(Leu) + H(+). The enzyme catalyses L-phenylalanyl-tRNA(Phe) + an N-terminal L-alpha-aminoacyl-[protein] = an N-terminal L-phenylalanyl-L-alpha-aminoacyl-[protein] + tRNA(Phe). In terms of biological role, functions in the N-end rule pathway of protein degradation where it conjugates Leu, Phe and, less efficiently, Met from aminoacyl-tRNAs to the N-termini of proteins containing an N-terminal arginine or lysine. The protein is Leucyl/phenylalanyl-tRNA--protein transferase of Agrobacterium fabrum (strain C58 / ATCC 33970) (Agrobacterium tumefaciens (strain C58)).